The chain runs to 142 residues: Hemoglobin subunit alpha (142 aa).

N-acetylserine is present on S1. Residues 1–142 (SLTDKDKATV…VSLALSERYR (142 aa)) form the Globin domain. H59 serves as a coordination point for O2. H88 serves as a coordination point for heme b.

The protein belongs to the globin family. Hb1 is a heterotetramer of two alpha chains and two beta-1 chains. Hb2 is a heterotetramer of two alpha chains and two beta-2 chains. In terms of tissue distribution, red blood cells.

In terms of biological role, involved in oxygen transport from gills to the various peripheral tissues. The polypeptide is Hemoglobin subunit alpha (hba) (Pseudaphritis urvillii (Congolli)).